Here is a 132-residue protein sequence, read N- to C-terminus: Ribonuclease P protein component (132 aa).

Belongs to the RnpA family. As to quaternary structure, consists of a catalytic RNA component (M1 or rnpB) and a protein subunit.

It catalyses the reaction Endonucleolytic cleavage of RNA, removing 5'-extranucleotides from tRNA precursor.. RNaseP catalyzes the removal of the 5'-leader sequence from pre-tRNA to produce the mature 5'-terminus. It can also cleave other RNA substrates such as 4.5S RNA. The protein component plays an auxiliary but essential role in vivo by binding to the 5'-leader sequence and broadening the substrate specificity of the ribozyme. In Micrococcus luteus (strain ATCC 4698 / DSM 20030 / JCM 1464 / CCM 169 / CCUG 5858 / IAM 1056 / NBRC 3333 / NCIMB 9278 / NCTC 2665 / VKM Ac-2230) (Micrococcus lysodeikticus), this protein is Ribonuclease P protein component.